A 91-amino-acid polypeptide reads, in one-letter code: Small ribosomal subunit protein uS19 (91 aa).

This sequence belongs to the universal ribosomal protein uS19 family.

Its function is as follows. Protein S19 forms a complex with S13 that binds strongly to the 16S ribosomal RNA. The polypeptide is Small ribosomal subunit protein uS19 (Marinobacter nauticus (strain ATCC 700491 / DSM 11845 / VT8) (Marinobacter aquaeolei)).